Here is a 433-residue protein sequence, read N- to C-terminus: Ornithine decarboxylase, chloroplastic (433 aa).

The residue at position 96 (Lys-96) is an N6-(pyridoxal phosphate)lysine. Pyridoxal 5'-phosphate-binding positions include Ser-228, Gly-266, and Glu-299–Arg-302. Substrate is bound at residue Tyr-342–Asp-343. The active-site Proton donor; shared with dimeric partner is the Cys-378. Substrate is bound at residue Asp-379. Tyr-407 lines the pyridoxal 5'-phosphate pocket.

Belongs to the Orn/Lys/Arg decarboxylase class-II family. As to quaternary structure, homodimer. Only the dimer is catalytically active, as the active sites are constructed of residues from both monomers. Pyridoxal 5'-phosphate serves as cofactor.

The protein resides in the plastid. The protein localises to the chloroplast. It catalyses the reaction L-ornithine + H(+) = putrescine + CO2. It participates in alkaloid biosynthesis; nicotine biosynthesis. The protein operates within amine and polyamine biosynthesis; putrescine biosynthesis via L-ornithine pathway; putrescine from L-ornithine: step 1/1. Functionally, involved in the biosynthesis of pyridine alkaloid natural products, leading mainly to the production of anabasine, anatabine, nicotine and nornicotine, effective deterrents against herbivores with antiparasitic and pesticide properties (neurotoxins); nornicotine serves as the precursor in the synthesis of the carcinogen compound N'-nitrosonornicotine (NNN). Catalyzes the first and rate-limiting step of polyamine biosynthesis that converts ornithine into putrescine, which is the precursor for the polyamines, spermidine and spermine. Polyamines are essential for cell proliferation and are implicated in cellular processes, ranging from DNA replication to apoptosis. This is Ornithine decarboxylase, chloroplastic from Nicotiana glauca (Glaucous tobacco).